The following is a 220-amino-acid chain: N-(5'-phosphoribosyl)anthranilate isomerase (220 aa).

It belongs to the TrpF family.

It catalyses the reaction N-(5-phospho-beta-D-ribosyl)anthranilate = 1-(2-carboxyphenylamino)-1-deoxy-D-ribulose 5-phosphate. It functions in the pathway amino-acid biosynthesis; L-tryptophan biosynthesis; L-tryptophan from chorismate: step 3/5. This is N-(5'-phosphoribosyl)anthranilate isomerase from Xylella fastidiosa (strain M23).